The following is a 125-amino-acid chain: Large ribosomal subunit protein bL12 (125 aa).

The protein belongs to the bacterial ribosomal protein bL12 family. As to quaternary structure, homodimer. Part of the ribosomal stalk of the 50S ribosomal subunit. Forms a multimeric L10(L12)X complex, where L10 forms an elongated spine to which 2 to 4 L12 dimers bind in a sequential fashion. Binds GTP-bound translation factors.

Functionally, forms part of the ribosomal stalk which helps the ribosome interact with GTP-bound translation factors. Is thus essential for accurate translation. The protein is Large ribosomal subunit protein bL12 of Gluconobacter oxydans (strain 621H) (Gluconobacter suboxydans).